Here is a 416-residue protein sequence, read N- to C-terminus: Probable mannose-6-phosphate isomerase (416 aa).

Residues Gln-99, His-101, Glu-126, and His-259 each contribute to the Zn(2+) site. Residue Arg-278 is part of the active site.

This sequence belongs to the mannose-6-phosphate isomerase type 1 family. Requires Zn(2+) as cofactor.

It localises to the cytoplasm. It carries out the reaction D-mannose 6-phosphate = D-fructose 6-phosphate. It participates in nucleotide-sugar biosynthesis; GDP-alpha-D-mannose biosynthesis; alpha-D-mannose 1-phosphate from D-fructose 6-phosphate: step 1/2. Its function is as follows. Involved in the synthesis of the GDP-mannose and dolichol-phosphate-mannose required for a number of critical mannosyl transfer reactions. This Caenorhabditis elegans protein is Probable mannose-6-phosphate isomerase.